The chain runs to 472 residues: MNVTSLFSFTSPAVKRLLGWKQGDEEEKWAEKAVDALVKKLKKKKGAMEELERALSCPGQPSNCVTIPRSLDGRLQVSHRKGLPHVIYCRVWRWPDLQSHHELKALECCEFPFGSKQKDVCINPYHYKRVDSPVLPPVLVPRNSEFNAKLSMLPRFRNPLHQTEPPMPQNATFPDSFPQQPANALPFTPNSPTNSYPSSPNSGTGSTATFPHSPSSSDPGSPFQMPETPPPAYMPPEEPMTQDCPQPMDTNLLAPNLPLEISNRTDVHPVAYQEPKHWCSIVYYELNNRVGEAFLASSTSVLVDGFTDPSNNRNRFCLGLLSNVNRNSTIENTRRHIGKGVHLYYVGGEVYAECLSDSSIFVQSRNCNYHHGFHPTTVCKIPSRCSLKIFNNQEFAELLAQSVNHGFEAVYELTKMCTIRMSFVKGWGAKYHRQDVTSTPCWIEIHLHGPLQWLDKVLTQMGSPHNPISSVS.

One can recognise an MH1 domain in the interval proline 12–proline 136. Positions 64, 109, 121, and 126 each coordinate Zn(2+). The segment at asparagine 158–glutamate 238 is disordered. Over residues glutamine 169 to alanine 182 the composition is skewed to polar residues. Low complexity predominate over residues threonine 188–proline 226. Residues glutamate 227–glutamate 238 show a composition bias toward pro residues. The MH2 domain occupies tryptophan 278–serine 472.

This sequence belongs to the dwarfin/SMAD family. In terms of assembly, may form trimers with another Smad1 and the co-Smad Smad4.

The protein localises to the cytoplasm. The protein resides in the nucleus. Its function is as follows. Involved in ventralization. May mediate Bmp2b signaling during embryonic dorsal-ventral pattern formation, and may itself be a transcriptional target for Smad5-mediated Bmp2b signaling. This chain is Mothers against decapentaplegic homolog 1 (smad1), found in Danio rerio (Zebrafish).